We begin with the raw amino-acid sequence, 655 residues long: Tumor necrosis factor receptor superfamily member 21 (655 aa).

The N-terminal stretch at 1-41 (MGTRASSITALASCSRTAGQVGATMVAGSLLLLGFLSTITA) is a signal peptide. At 42–349 (QPEQKTLSLP…AHKHFDINEH (308 aa)) the chain is on the extracellular side. 4 TNFR-Cys repeats span residues 50-88 (LPGTYRHVDRTTGQVLTCDKCPAGTYVSEHCTNMSLRVC), 90-131 (SCPA…DREC), 133-167 (CPPGMYQSNGTCAPHTVCPVGWGVRKKGTENEDVR), and 170-211 (QCAR…DNVC). 9 disulfides stabilise this stretch: Cys-67/Cys-80, Cys-70/Cys-88, Cys-91/Cys-106, Cys-109/Cys-123, Cys-113/Cys-131, Cys-133/Cys-144, Cys-150/Cys-168, Cys-171/Cys-186, and Cys-192/Cys-211. N-linked (GlcNAc...) asparagine glycosylation is present at Asn-82. Asn-141 carries N-linked (GlcNAc...) asparagine glycosylation. Disordered stretches follow at residues 222 to 305 (PPSS…QAPH) and 318 to 339 (EATGEKSSTAIKAPKRGHPRQN). Composition is skewed to polar residues over residues 241 to 262 (VPSSTYEPQGMNSTDSNSTASV) and 276 to 302 (PDNTSSTSGKEGTNRTLPNPPQVTHQQ). 4 N-linked (GlcNAc...) asparagine glycosylation sites follow: Asn-252, Asn-257, Asn-278, and Asn-289. Residues 330-339 (APKRGHPRQN) are compositionally biased toward basic residues. A helical transmembrane segment spans residues 350-370 (LPWMIVLFLLLVLVLIVVCSI). Residue Cys-368 is the site of S-palmitoyl cysteine attachment. Over 371–655 (RKSSRTLKKG…SVYSHLPDLL (285 aa)) the chain is Cytoplasmic. Residues 415-498 (GIDILKLVAA…DVVEKIRGLM (84 aa)) enclose the Death domain.

In terms of assembly, associates with TRADD. Interacts with NGFR. Interacts with CASP8. Oxidized in response to reactive oxygen species (ROS), leading to endocytosis. In terms of tissue distribution, detected in spleen B-cells (at protein level). Ubiquitous. Highly expressed in adult spleen, thymus, testis, prostate, ovary, small intestine, colon, brain, lung and kidney, and in fetal brain, liver and lung. Detected at lower levels in adult peripheral blood leukocytes, lung, and in fetal muscle, heart, kidney, small intestine and skin. Detected in T-cells, B-cells and monocytes. In T-cells expression is highest in Th0 cells, intermediate in Th2 cells and lower in Th1 cells. Expressed at low levels in proliferating progenitors in the spinal cord, but is highly expressed by differentiating neurons within the spinal cord and adjacent dorsal root ganglia.

The protein resides in the cell membrane. In terms of biological role, promotes apoptosis, possibly via a pathway that involves the activation of NF-kappa-B. Can also promote apoptosis mediated by BAX and by the release of cytochrome c from the mitochondria into the cytoplasm. Trophic-factor deprivation triggers the cleavage of surface APP by beta-secretase to release sAPP-beta which is further cleaved to release an N-terminal fragment of APP (N-APP). Negatively regulates oligodendrocyte survival, maturation and myelination. Plays a role in signaling cascades triggered by stimulation of T-cell receptors, in the adaptive immune response and in the regulation of T-cell differentiation and proliferation. Negatively regulates T-cell responses and the release of cytokines such as IL4, IL5, IL10, IL13 and IFNG by Th2 cells. Negatively regulates the production of IgG, IgM and IgM in response to antigens. May inhibit the activation of JNK in response to T-cell stimulation. Also acts as a regulator of pyroptosis: recruits CASP8 in response to reactive oxygen species (ROS) and subsequent oxidation, leading to activation of GSDMC. This is Tumor necrosis factor receptor superfamily member 21 (Tnfrsf21) from Mus musculus (Mouse).